The sequence spans 322 residues: Cytochrome c biogenesis protein CcsA (322 aa).

8 helical membrane passes run 9–29 (ILTHISFSIVSIVITLHLITL), 44–64 (GMIATFLCLTGLLITRWIYSG), 71–91 (LYESFIFLSWSFSLIHIVPYF), 98–118 (LTTITASSTIFTQGFATSGLL), 143–163 (MILSYAALLCGSLLSVALLVI), 226–246 (VISLGFIFLTIGILSGAVWAN), 253–273 (WSWDPKETWAFITWIVFAIYL), and 287–307 (AIVATLGFLIIWICYFGVNLL).

Belongs to the CcmF/CycK/Ccl1/NrfE/CcsA family. In terms of assembly, may interact with Ccs1.

It is found in the plastid. Its subcellular location is the chloroplast thylakoid membrane. Functionally, required during biogenesis of c-type cytochromes (cytochrome c6 and cytochrome f) at the step of heme attachment. This Guizotia abyssinica (Niger) protein is Cytochrome c biogenesis protein CcsA.